Here is a 466-residue protein sequence, read N- to C-terminus: 3-isopropylmalate dehydratase large subunit (466 aa).

Residues Cys-347, Cys-407, and Cys-410 each contribute to the [4Fe-4S] cluster site.

This sequence belongs to the aconitase/IPM isomerase family. LeuC type 1 subfamily. Heterodimer of LeuC and LeuD. It depends on [4Fe-4S] cluster as a cofactor.

The catalysed reaction is (2R,3S)-3-isopropylmalate = (2S)-2-isopropylmalate. Its pathway is amino-acid biosynthesis; L-leucine biosynthesis; L-leucine from 3-methyl-2-oxobutanoate: step 2/4. Catalyzes the isomerization between 2-isopropylmalate and 3-isopropylmalate, via the formation of 2-isopropylmaleate. This is 3-isopropylmalate dehydratase large subunit from Shigella boydii serotype 4 (strain Sb227).